The chain runs to 372 residues: L-selectin (372 aa).

Positions 1–28 are cleaved as a signal peptide; it reads MIFPWKCQSTQRDLWNIFKLWGWTMLCC. The propeptide occupies 29-38; that stretch reads DFLAHHGTDC. Topologically, residues 39-332 are extracellular; the sequence is WTYHYSEKPM…FSMIKEGDYN (294 aa). Positions 55–155 constitute a C-type lectin domain; the sequence is RFCRDNYTDL…ACHKLKAALC (101 aa). Disulfide bonds link Cys57/Cys155, Cys128/Cys147, Cys128/Cys160, Cys160/Cys171, Cys165/Cys180, Cys182/Cys191, Cys197/Cys241, Cys227/Cys254, Cys259/Cys303, and Cys289/Cys316. N-linked (GlcNAc...) asparagine glycans are attached at residues Asn60 and Asn104. Residues Glu118, Asn120, Glu126, Asn143, and Asp144 each coordinate Ca(2+). One can recognise an EGF-like domain in the interval 156-192; it reads YTASCQPWSCSGHGECVEIINNYTCNCDVGYYGPQCQ. Asn177 is a glycosylation site (N-linked (GlcNAc...) asparagine). Sushi domains follow at residues 195–256 and 257–318; these read IQCE…TCQV and IQCE…ICQK. Asn216, Asn232, Asn246, and Asn271 each carry an N-linked (GlcNAc...) asparagine glycan. A helical transmembrane segment spans residues 333–355; that stretch reads PLFIPVAVMVTAFSGLAFIIWLA. At 356 to 372 the chain is on the cytoplasmic side; the sequence is RRLKKGKKSKRSMDDPY.

It belongs to the selectin/LECAM family. As to quaternary structure, interaction with SELPLG/PSGL1 and PODXL2 is required for promoting recruitment and rolling of leukocytes. This interaction is dependent on the sialyl Lewis X glycan modification of SELPLG and PODXL2, and tyrosine sulfation modifications of SELPLG. Sulfation on 'Tyr-51' of SELPLG is important for L-selectin binding. In terms of processing, N-glycosylated.

Its subcellular location is the cell membrane. Functionally, calcium-dependent lectin that mediates cell adhesion by binding to glycoproteins on neighboring cells. Mediates the adherence of lymphocytes to endothelial cells of high endothelial venules in peripheral lymph nodes. Promotes initial tethering and rolling of leukocytes in endothelia. In Pan troglodytes (Chimpanzee), this protein is L-selectin (SELL).